A 587-amino-acid polypeptide reads, in one-letter code: ATF/CREB activator 2 (587 aa).

Disordered stretches follow at residues 1–62, 123–144, 169–195, and 381–423; these read MFTG…SRSL, LRQQ…EEES, NLSQ…SNIA, and TGGE…IPGT. The span at 16–29 shows a compositional bias: basic and acidic residues; that stretch reads KQKDNNKRGIDDTS. Composition is skewed to low complexity over residues 39–57 and 123–134; these read SVSD…NNSA and LRQQQQQDQRQQ. Ser171 and Ser179 each carry phosphoserine. Over residues 385–395 the composition is skewed to basic and acidic residues; it reads NRGKSALRESH. A compositionally biased stretch (polar residues) spans 396–418; it reads SNPSFTPKSQGSHLNLAANTQGN. Position 399 is a phosphoserine (Ser399). Residues 425–488 enclose the bZIP domain; the sequence is AWKRARLLER…SKFKKFSKIH (64 aa). The segment at 427-447 is basic motif; it reads KRARLLERNRIAASKCRQRKK. The leucine-zipper stretch occupies residues 453 to 467; that stretch reads LQKEFNEIKDENRIL. Residues 552-587 form a disordered region; the sequence is SQRFGSDTDDDDIDLKPVEGGKDPDNQSLPNSEKIK. The residue at position 557 (Ser557) is a Phosphoserine. Position 559 is a phosphothreonine (Thr559). Positions 565-576 are enriched in basic and acidic residues; it reads DLKPVEGGKDPD. A compositionally biased stretch (polar residues) spans 577–587; the sequence is NQSLPNSEKIK.

This sequence belongs to the bZIP family.

Its subcellular location is the nucleus. Transcriptional activator of promoters containing ATF/CREB sites. Can independently stimulate transcription through ATF/CREB sites. Important for a variety of biological functions including growth on non-optimal carbon sources. This is ATF/CREB activator 2 (CST6) from Saccharomyces cerevisiae (strain ATCC 204508 / S288c) (Baker's yeast).